The primary structure comprises 299 residues: GTPase Era (299 aa).

Positions Lys4 to Glu171 constitute an Era-type G domain. The interval Gly12–Ser19 is G1. Gly12–Ser19 contributes to the GTP binding site. The interval Gln38–Asn42 is G2. A G3 region spans residues Asp59–Gly62. Residues Asp59–Ile63 and Asn121–Asp124 each bind GTP. The interval Asn121–Asp124 is G4. The tract at residues Ile150–Ala152 is G5. Positions Thr202–Lys280 constitute a KH type-2 domain.

The protein belongs to the TRAFAC class TrmE-Era-EngA-EngB-Septin-like GTPase superfamily. Era GTPase family. As to quaternary structure, monomer.

The protein resides in the cytoplasm. It localises to the cell membrane. Its function is as follows. An essential GTPase that binds both GDP and GTP, with rapid nucleotide exchange. Plays a role in 16S rRNA processing and 30S ribosomal subunit biogenesis and possibly also in cell cycle regulation and energy metabolism. The protein is GTPase Era of Streptococcus pneumoniae (strain Hungary19A-6).